The chain runs to 430 residues: Protein POLLENLESS 3-LIKE 2 (430 aa).

The segment at 1-21 (MMRDVFRPTKSAPCSPAKPLG) is disordered. TPR repeat units lie at residues 40 to 73 (DSPYVRAKNVQLVEKDPERAIPLFWKAINAGDRV), 74 to 107 (DSALKDMAIVMKQQNRAEEAIEAIKSLRVRCSDQ), 110 to 143 (ESLDNILLDLYKRCGRLDDQIGLLKHKLFLIQKG), 170 to 203 (TRLLGNLGWALMQRDNFVEAEDAYRRALSIAPDN), 205 to 236 (KMCNLGICLMKQGRIDEAKETLRRVKPAVVDG), and 238 to 257 (RGVDSHLKAYERAQQMLNDL). The stretch at 81–107 (AIVMKQQNRAEEAIEAIKSLRVRCSDQ) forms a coiled coil. The segment at 346–376 (KLKRTRSSSQGMGMLSGIGGDHEGETNTSTR) is disordered.

The protein belongs to the MS5 protein family.

It is found in the nucleus. Probably involved in the regulation of cell division. The protein is Protein POLLENLESS 3-LIKE 2 of Arabidopsis thaliana (Mouse-ear cress).